The sequence spans 1705 residues: ALK tyrosine kinase receptor (1705 aa).

The N-terminal stretch at 1 to 21 is a signal peptide; that stretch reads MIARILYFFLWSAAFLPELQC. Topologically, residues 22–1035 are extracellular; sequence ASQRTADALT…SLSHLALGLS (1014 aa). N-linked (GlcNAc...) asparagine glycosylation is found at N40 and N48. Positions 54–76 are heparin-binding region; the sequence is RIKRKTLSVDFAVPSLLRYYLAL. Residues N124, N259, N334, N434, N442, N458, N484, N578, N590, and N635 are each glycosylated (N-linked (GlcNAc...) asparagine). The MAM domain occupies 486 to 644; it reads SYCSFGREDC…NFTLSMECFL (159 aa). An intrachain disulfide couples C694 to C707. N-linked (GlcNAc...) asparagine glycosylation occurs at N717. A disulfide bond links C788 and C799. Residues N808 and N881 are each glycosylated (N-linked (GlcNAc...) asparagine). The interval 842–892 is disordered; it reads GGGRGYSSQSETPEEVMDRDPSIPGRNGKSGTAGGGGGWNDSAPVPQGGRP. A disulfide bridge links C903 with C921. An N-linked (GlcNAc...) asparagine glycan is attached at N979. 2 cysteine pairs are disulfide-bonded: C980–C988 and C983–C997. The EGF-like stretch occupies residues 980 to 1016; sequence CSHCESGDCHETSEGMVCYCDEELTLAPDGVSCINST. N-linked (GlcNAc...) asparagine glycosylation occurs at N1014. The helical transmembrane segment at 1036 to 1056 threads the bilayer; the sequence is VGTSALIAALLLAVSGVMIMY. Over 1057 to 1705 the chain is Cytoplasmic; that stretch reads RRKHTELQSI…KMEGHNATVL (649 aa). Positions 1113-1389 constitute a Protein kinase domain; that stretch reads ISLTRGLGHG…IDYCLQDPDV (277 aa). Residues 1119 to 1127 and K1147 each bind ATP; that span reads LGHGAFGEV. D1246 acts as the Proton acceptor in catalysis. Disordered regions lie at residues 1395–1499, 1505–1524, 1532–1557, 1588–1613, and 1646–1681; these read PVEY…GHVN, AHSS…WNPT, QQQK…GQEQ, QQQQ…PAPT, and GLPM…DSRP. Positions 1484–1493 are enriched in polar residues; that stretch reads KPSSTTSNAQ. Low complexity-rich tracts occupy residues 1532–1544 and 1588–1602; these read QQQK…AQRQ and QQQQ…LCRP. Residues 1603–1613 are compositionally biased toward pro residues; sequence LLPPPPPPAPT.

The protein belongs to the protein kinase superfamily. Tyr protein kinase family. Insulin receptor subfamily. In terms of assembly, homodimer; homodimerizes upon binding to alkal ligands (alkal1, alkal2a or alkal2b). Highly expressed in the developing central nervous system: highly expressed in brain, with much lower expression in heart, caudal fin and testis.

The protein localises to the cell membrane. The catalysed reaction is L-tyrosyl-[protein] + ATP = O-phospho-L-tyrosyl-[protein] + ADP + H(+). Inhibited by ALK inhibitor TAE684. Functionally, receptor tyrosine kinase required for neurogenesis in the developing central nervous system. Following activation by alkal ligands (alkal1, alkal2a or alkal2b) at the cell surface, transduces an extracellular signal into an intracellular response. Ligand-binding to the extracellular domain induces tyrosine kinase activation, resulting in the activation of the mitogen-activated protein kinase (MAPK) pathway. Phosphorylates almost exclusively at the first tyrosine of the Y-x-x-x-Y-Y motif. This chain is ALK tyrosine kinase receptor, found in Danio rerio (Zebrafish).